A 400-amino-acid polypeptide reads, in one-letter code: Elongation factor Tu 1 (400 aa).

The tr-type G domain occupies 10–209; it reads KPHVNIGTIG…AVDEYIPTPQ (200 aa). The G1 stretch occupies residues 19-26; the sequence is GHVDHGKT. Position 19–26 (19–26) interacts with GTP; the sequence is GHVDHGKT. Residue Thr26 participates in Mg(2+) binding. Residues 60 to 64 are G2; the sequence is GITIN. Residues 81 to 84 form a G3 region; the sequence is DCPG. GTP-binding positions include 81–85 and 136–139; these read DCPGH and NKAD. Residues 136–139 form a G4 region; sequence NKAD. Positions 174 to 176 are G5; that stretch reads SAL.

Belongs to the TRAFAC class translation factor GTPase superfamily. Classic translation factor GTPase family. EF-Tu/EF-1A subfamily. In terms of assembly, monomer.

Its subcellular location is the cytoplasm. The catalysed reaction is GTP + H2O = GDP + phosphate + H(+). In terms of biological role, GTP hydrolase that promotes the GTP-dependent binding of aminoacyl-tRNA to the A-site of ribosomes during protein biosynthesis. This chain is Elongation factor Tu 1, found in Pelotomaculum thermopropionicum (strain DSM 13744 / JCM 10971 / SI).